The sequence spans 682 residues: Serine/threonine-protein kinase PLK2 (682 aa).

The disordered stretch occupies residues 25 to 67 (ACGGDSKKKRPQQPSEDGQSQAQVTPAAPHHHHHHSHSGPEIS). Residues 36-48 (QQPSEDGQSQAQV) show a composition bias toward polar residues. The Protein kinase domain occupies 79–331 (YCRGKVLGKG…LDDIIRHDFF (253 aa)). ATP is bound by residues 85–93 (LGKGGFAKC) and lysine 108. Aspartate 202 serves as the catalytic Proton acceptor. A Phosphothreonine modification is found at threonine 236. The tract at residues 402-430 (TSITQQPSKHRTDEELQPPPTTFAKSGTS) is disordered. POLO box domains lie at 500 to 578 (WVTK…YMEE) and 598 to 682 (YLLQ…QRCN).

The protein belongs to the protein kinase superfamily. Ser/Thr protein kinase family. CDC5/Polo subfamily. Interacts with CIB1. Interacts with NSF; causing NSF dissociation from GRIA2. Post-translationally, catalytic activity is enhanced by phosphorylation of Thr-236.

The protein localises to the cytoplasm. It is found in the cytoskeleton. It localises to the microtubule organizing center. Its subcellular location is the centrosome. The protein resides in the centriole. The protein localises to the cell projection. It is found in the dendrite. It catalyses the reaction L-seryl-[protein] + ATP = O-phospho-L-seryl-[protein] + ADP + H(+). The catalysed reaction is L-threonyl-[protein] + ATP = O-phospho-L-threonyl-[protein] + ADP + H(+). With respect to regulation, activated by phosphorylation of Thr-236. Once activated, activity is stimulated by binding target proteins. Tumor suppressor serine/threonine-protein kinase involved in synaptic plasticity, centriole duplication and G1/S phase transition. Polo-like kinases act by binding and phosphorylating proteins that are already phosphorylated on a specific motif recognized by the POLO box domains. Phosphorylates CPAP, NPM1, RAPGEF2, RASGRF1, SNCA, SIPA1L1 and SYNGAP1. Plays a key role in synaptic plasticity and memory by regulating the Ras and Rap protein signaling: required for overactivity-dependent spine remodeling by phosphorylating the Ras activator RASGRF1 and the Rap inhibitor SIPA1L1 leading to their degradation by the proteasome. Conversely, phosphorylates the Rap activator RAPGEF2 and the Ras inhibitor SYNGAP1, promoting their activity. Also regulates synaptic plasticity independently of kinase activity, via its interaction with NSF that disrupts the interaction between NSF and the GRIA2 subunit of AMPARs, leading to a rapid rundown of AMPAR-mediated current that occludes long term depression. Required for procentriole formation and centriole duplication by phosphorylating CPAP and NPM1, respectively. Its induction by p53/TP53 suggests that it may participate in the mitotic checkpoint following stress. This chain is Serine/threonine-protein kinase PLK2 (Plk2), found in Rattus norvegicus (Rat).